We begin with the raw amino-acid sequence, 377 residues long: Homoserine O-succinyltransferase (377 aa).

One can recognise an AB hydrolase-1 domain in the interval 50–358 (NAILVCHALS…PSTYGHDSFL (309 aa)). The Nucleophile role is filled by S156. A substrate-binding site is contributed by R226. Residues D321 and H354 contribute to the active site. Position 355 (D355) interacts with substrate.

It belongs to the AB hydrolase superfamily. MetX family. In terms of assembly, homodimer.

It is found in the cytoplasm. The catalysed reaction is L-homoserine + succinyl-CoA = O-succinyl-L-homoserine + CoA. Its pathway is amino-acid biosynthesis; L-methionine biosynthesis via de novo pathway; O-succinyl-L-homoserine from L-homoserine: step 1/1. Its function is as follows. Transfers a succinyl group from succinyl-CoA to L-homoserine, forming succinyl-L-homoserine. The chain is Homoserine O-succinyltransferase from Nitrosomonas eutropha (strain DSM 101675 / C91 / Nm57).